A 337-amino-acid chain; its full sequence is Protein-arginine kinase (337 aa).

The 232-residue stretch at 8-239 (VVLSSRIRLA…KQIISSERRA (232 aa)) folds into the Phosphagen kinase C-terminal domain. ATP contacts are provided by residues 11–15 (SSRIR), histidine 76, arginine 110, 161–165 (RASVM), and 192–197 (RGIYGE). The RDXXRA motif of the pArg binding pocket involved in allosteric regulation signature appears at 321 to 326 (RDVKRA).

This sequence belongs to the ATP:guanido phosphotransferase family.

The enzyme catalyses L-arginyl-[protein] + ATP = N(omega)-phospho-L-arginyl-[protein] + ADP + H(+). Appears to be allosterically activated by the binding of pArg-containing polypeptides to the pArg-binding pocket localized in the C-terminal domain of McsB. Its function is as follows. Catalyzes the specific phosphorylation of arginine residues in proteins. The protein is Protein-arginine kinase of Caldanaerobacter subterraneus subsp. tengcongensis (strain DSM 15242 / JCM 11007 / NBRC 100824 / MB4) (Thermoanaerobacter tengcongensis).